A 201-amino-acid polypeptide reads, in one-letter code: Ribonuclease HII (201 aa).

Positions 12–201 (DLVAGVDEVG…VRELLDVSVQ (190 aa)) constitute an RNase H type-2 domain. Residues aspartate 18, glutamate 19, and aspartate 110 each contribute to the a divalent metal cation site.

The protein belongs to the RNase HII family. Mn(2+) is required as a cofactor. The cofactor is Mg(2+).

It is found in the cytoplasm. The catalysed reaction is Endonucleolytic cleavage to 5'-phosphomonoester.. In terms of biological role, endonuclease that specifically degrades the RNA of RNA-DNA hybrids. The protein is Ribonuclease HII of Pseudomonas aeruginosa (strain ATCC 15692 / DSM 22644 / CIP 104116 / JCM 14847 / LMG 12228 / 1C / PRS 101 / PAO1).